The sequence spans 207 residues: Thiamine-phosphate synthase (207 aa).

4-amino-2-methyl-5-(diphosphooxymethyl)pyrimidine contacts are provided by residues 38–42 and Asn-70; that span reads QYRAK. Mg(2+) contacts are provided by Asp-71 and Asp-90. Position 109 (Thr-109) interacts with 4-amino-2-methyl-5-(diphosphooxymethyl)pyrimidine. 135 to 137 is a binding site for 2-[(2R,5Z)-2-carboxy-4-methylthiazol-5(2H)-ylidene]ethyl phosphate; that stretch reads TNS. Position 138 (Lys-138) interacts with 4-amino-2-methyl-5-(diphosphooxymethyl)pyrimidine. 2-[(2R,5Z)-2-carboxy-4-methylthiazol-5(2H)-ylidene]ethyl phosphate contacts are provided by residues Gly-165 and 185 to 186; that span reads IS.

This sequence belongs to the thiamine-phosphate synthase family. Requires Mg(2+) as cofactor.

It carries out the reaction 2-[(2R,5Z)-2-carboxy-4-methylthiazol-5(2H)-ylidene]ethyl phosphate + 4-amino-2-methyl-5-(diphosphooxymethyl)pyrimidine + 2 H(+) = thiamine phosphate + CO2 + diphosphate. The catalysed reaction is 2-(2-carboxy-4-methylthiazol-5-yl)ethyl phosphate + 4-amino-2-methyl-5-(diphosphooxymethyl)pyrimidine + 2 H(+) = thiamine phosphate + CO2 + diphosphate. It catalyses the reaction 4-methyl-5-(2-phosphooxyethyl)-thiazole + 4-amino-2-methyl-5-(diphosphooxymethyl)pyrimidine + H(+) = thiamine phosphate + diphosphate. It functions in the pathway cofactor biosynthesis; thiamine diphosphate biosynthesis; thiamine phosphate from 4-amino-2-methyl-5-diphosphomethylpyrimidine and 4-methyl-5-(2-phosphoethyl)-thiazole: step 1/1. In terms of biological role, condenses 4-methyl-5-(beta-hydroxyethyl)thiazole monophosphate (THZ-P) and 2-methyl-4-amino-5-hydroxymethyl pyrimidine pyrophosphate (HMP-PP) to form thiamine monophosphate (TMP). The sequence is that of Thiamine-phosphate synthase from Clostridium perfringens (strain SM101 / Type A).